The sequence spans 245 residues: tRNA (guanine-N(1)-)-methyltransferase (245 aa).

Residues glycine 111 and 131 to 136 contribute to the S-adenosyl-L-methionine site; that span reads IGDYVL.

It belongs to the RNA methyltransferase TrmD family. As to quaternary structure, homodimer.

The protein resides in the cytoplasm. It catalyses the reaction guanosine(37) in tRNA + S-adenosyl-L-methionine = N(1)-methylguanosine(37) in tRNA + S-adenosyl-L-homocysteine + H(+). In terms of biological role, specifically methylates guanosine-37 in various tRNAs. This chain is tRNA (guanine-N(1)-)-methyltransferase, found in Staphylococcus carnosus (strain TM300).